We begin with the raw amino-acid sequence, 744 residues long: MNILINKRIFLLVTLVGIQLNVTAKQNSSNSNREELLPIIVNTNDDSNKLPGRSVLKQKNIEQXQADNAANLINILPGVNMAGGFRPGGQTLNINGMGDAEDVRVQLDGATKSFEKYQQGSIFIEPELLRRVTVDKGNYSPQYGNGGFAGTVKFETKDARDFLQENQKIGGFLKYGNNSNNNQKTYSTALVLQNEQKNIDLLLFGSVRNAGDYKRPDNSKILFSKNNQKTGLIKLNWQISPEHLLTLSSVYGIHKGWEPFAAKRDILPKPSLSDIMRYGTDIAWKRKLVYRDQKDENYTLKYNYLPENNPWINLSTQFSYSKTTQNDMRPKEASSGLVGSLGNQSWITYSDLTFDINNTSTFNIKTTVHELLFGLQWLKNTRNTLMYDKSKVRKADYNYGYFQPYYMPSGRQYTQAFYLQDQIKWKNIIFSTGVRYDHINNIGQKNLALKYNDISAGHDYSQKNYNGWSYYLGLNYDVNHYLSLFTNFSKTWRAPVIDEQYETQFKQSSVPATSLNLEKEMINQTRVGGIITLNHLFQENDAFQFRTTYFYNRGKNEIFKTRGVNCVGNAADTNNKVCPKIIENYRNLPGYVIQGAELEAYYQSTYLFGEITYSYVKGKRDTSPRNPWGKTSTWIAEIPPRKATTALGFNVPKYYLTVGWRAEFVRRQDRSPLSGDPKASSWSLPASRGYSLHNLFLSWSPAKIKGMNVKITVDNLFNRAYNPYLGELASGTGRNIKFSLSQKF.

The N-terminal stretch at 1–24 (MNILINKRIFLLVTLVGIQLNVTA) is a signal peptide. The region spanning 45 to 157 (DDSNKLPGRS…FAGTVKFETK (113 aa)) is the TBDR plug domain. Residues 168–744 (KIGGFLKYGN…NIKFSLSQKF (577 aa)) enclose the TBDR beta-barrel domain.

Belongs to the TonB-dependent receptor family.

It localises to the cell outer membrane. Its function is as follows. Heme receptor. In Haemophilus influenzae (strain ATCC 51907 / DSM 11121 / KW20 / Rd), this protein is TonB-dependent heme receptor A (tdhA).